Consider the following 293-residue polypeptide: MATNKSVGVFSSASLAVEYVDSLLPENPLQEPFKNAWVYMLDNYTKFQIATWGSLIVHEAIYFLFSLPGFLFQFIPYMRKYKIQKDKPETFEGQWKCLKKILFNHFFIQLPLICGTYYFTEFFNIPYDWERMPRWYLTLARCLGCAVIEDTWHYFLHRLLHHKRIYKYIHKVHHEFQAPFGIEAEYAHPLETLILGTGFFIGIVLLCDHVILLWAWVTIRLLETIDVHSGYDIPLNPLNLVPFYTGARHHDFHHMNFIGNYASTFTWWDKLFGTDAQYHAYIEKSKKLGKKSD.

The next 2 helical transmembrane spans lie at 55–75 (LIVH…FQFI) and 100–120 (KILF…YYFT). The region spanning 144 to 274 (GCAVIEDTWH…FTWWDKLFGT (131 aa)) is the Fatty acid hydroxylase domain. The Histidine box-1 motif lies at 157–161 (HRLLH). Residues 170–174 (HKVHH) carry the Histidine box-2 motif. The chain crosses the membrane as a helical span at residues 199 to 219 (FFIGIVLLCDHVILLWAWVTI). The Histidine box-3 motif lies at 249–255 (HHDFHHM).

This sequence belongs to the sterol desaturase family. Fe cation serves as cofactor. Post-translationally, ubiquitinated by MARCHF6, leading to proteasomal degradation.

The protein resides in the endoplasmic reticulum membrane. It carries out the reaction 4,4-dimethyl-5alpha-cholest-7-en-3beta-ol + 6 Fe(II)-[cytochrome b5] + 3 O2 + 5 H(+) = 4alpha-carboxy-4beta-methyl-5alpha-cholest-7-ene-3beta-ol + 6 Fe(III)-[cytochrome b5] + 4 H2O. It catalyses the reaction 4,4-dimethyl-5alpha-cholesta-8,24-dien-3beta-ol + 6 Fe(II)-[cytochrome b5] + 3 O2 + 5 H(+) = 4beta-methylzymosterol-4alpha-carboxylate + 6 Fe(III)-[cytochrome b5] + 4 H2O. The enzyme catalyses 4alpha-methylzymosterol + 6 Fe(II)-[cytochrome b5] + 3 O2 + 5 H(+) = 4alpha-carboxyzymosterol + 6 Fe(III)-[cytochrome b5] + 4 H2O. The catalysed reaction is 4alpha-methyl-5alpha-cholest-7-en-3beta-ol + 6 Fe(II)-[cytochrome b5] + 3 O2 + 5 H(+) = 4alpha-carboxy-5alpha-cholest-7-en-3beta-ol + 6 Fe(III)-[cytochrome b5] + 4 H2O. It carries out the reaction 4,4-dimethyl-5alpha-cholest-8-en-3beta-ol + 6 Fe(II)-[cytochrome b5] + 3 O2 + 5 H(+) = 4alpha-carboxy-4beta-methyl-5alpha-cholest-8-en-3beta-ol + 6 Fe(III)-[cytochrome b5] + 4 H2O. It catalyses the reaction 4alpha-methyl-5alpha-cholest-8-en-3beta-ol + 6 Fe(II)-[cytochrome b5] + 3 O2 + 5 H(+) = 4alpha-carboxy-5alpha-cholest-8-ene-3beta-ol + 6 Fe(III)-[cytochrome b5] + 4 H2O. It participates in steroid biosynthesis; zymosterol biosynthesis; zymosterol from lanosterol: step 3/6. Its pathway is steroid biosynthesis; cholesterol biosynthesis. Catalyzes the three-step monooxygenation required for the demethylation of 4,4-dimethyl and 4alpha-methylsterols, which can be subsequently metabolized to cholesterol. The protein is Methylsterol monooxygenase 1 (Msmo1) of Mus musculus (Mouse).